Consider the following 165-residue polypeptide: 2-C-methyl-D-erythritol 2,4-cyclodiphosphate synthase (165 aa).

Residues Asp8 and His10 each contribute to the a divalent metal cation site. Residues 8–10 and 34–35 each bind 4-CDP-2-C-methyl-D-erythritol 2-phosphate; these read DVH and HS. His42 contributes to the a divalent metal cation binding site. Residues 56 to 58, 61 to 65, 100 to 106, 132 to 135, Phe139, and Arg142 contribute to the 4-CDP-2-C-methyl-D-erythritol 2-phosphate site; these read DIG, FPDTD, AQAPKMA, and TTTE.

Belongs to the IspF family. In terms of assembly, homotrimer. A divalent metal cation serves as cofactor.

It catalyses the reaction 4-CDP-2-C-methyl-D-erythritol 2-phosphate = 2-C-methyl-D-erythritol 2,4-cyclic diphosphate + CMP. Its pathway is isoprenoid biosynthesis; isopentenyl diphosphate biosynthesis via DXP pathway; isopentenyl diphosphate from 1-deoxy-D-xylulose 5-phosphate: step 4/6. Its function is as follows. Involved in the biosynthesis of isopentenyl diphosphate (IPP) and dimethylallyl diphosphate (DMAPP), two major building blocks of isoprenoid compounds. Catalyzes the conversion of 4-diphosphocytidyl-2-C-methyl-D-erythritol 2-phosphate (CDP-ME2P) to 2-C-methyl-D-erythritol 2,4-cyclodiphosphate (ME-CPP) with a corresponding release of cytidine 5-monophosphate (CMP). This chain is 2-C-methyl-D-erythritol 2,4-cyclodiphosphate synthase, found in Pectobacterium atrosepticum (strain SCRI 1043 / ATCC BAA-672) (Erwinia carotovora subsp. atroseptica).